A 342-amino-acid polypeptide reads, in one-letter code: Organic solute transporter alpha-like protein 2 (342 aa).

Topologically, residues 1 to 50 are extracellular; it reads MLEISPWETLVKLLTDSLLNCTGTHEDVPHAKTFLRSLTTTYIASLAVAT. Residue Asn-20 is glycosylated (N-linked (GlcNAc...) asparagine). A helical transmembrane segment spans residues 51 to 71; that stretch reads AVTVGTVCLAVLHLIYIHFYI. The Cytoplasmic segment spans residues 72–79; sequence THSSRRLH. A helical membrane pass occupies residues 80 to 100; it reads IVLLACTAPLVSLLALVAMYM. Topologically, residues 101–109 are extracellular; the sequence is PRVWFLSHL. A helical membrane pass occupies residues 110–130; sequence LSFLYFSFALWVIICLLLHIF. Residues 131-176 lie on the Cytoplasmic side of the membrane; that stretch reads DGHHALVTKMMQRLQYVEIATPPFCCLFPCLPKVRLEGKKIRWCEL. Residues 177–197 traverse the membrane as a helical segment; that stretch reads MVMQAPIVRLFATLVSLVIYF. The Extracellular segment spans residues 198–208; sequence EYQDQGLVPLK. The chain crosses the membrane as a helical span at residues 209 to 229; that stretch reads VLDFITLPSLLAGIYGTHILV. Residues 230–243 are Cytoplasmic-facing; sequence TTVSRMDELISYRY. Residues 244-264 form a helical membrane-spanning segment; sequence VVVFRLLDFFFMVFGLQQPVF. Topologically, residues 265 to 290 are extracellular; it reads DFLARYGAFGCGTVLPAIETSFYWKN. Residues 291-311 form a helical membrane-spanning segment; that stretch reads FFTVIEAFCVTLISTVLLQPS. Over 312-342 the chain is Cytoplasmic; it reads KSSFFDKHPSCRSMSSARSTITDVDTDESTT.

The protein belongs to the OST-alpha family.

The protein resides in the cell membrane. Probable transporter. The chain is Organic solute transporter alpha-like protein 2 (osta-2) from Caenorhabditis elegans.